Here is a 588-residue protein sequence, read N- to C-terminus: Aspartate--tRNA ligase (588 aa).

L-aspartate is bound at residue Glu174. Residues 198-201 (QLFK) form an aspartate region. Arg220 provides a ligand contact to L-aspartate. ATP-binding positions include 220–222 (RDE) and Gln229. His448 contributes to the L-aspartate binding site. Glu482 provides a ligand contact to ATP. Arg489 contributes to the L-aspartate binding site. 534 to 537 (GIDR) contacts ATP.

This sequence belongs to the class-II aminoacyl-tRNA synthetase family. Type 1 subfamily. Homodimer.

It localises to the cytoplasm. It carries out the reaction tRNA(Asp) + L-aspartate + ATP = L-aspartyl-tRNA(Asp) + AMP + diphosphate. Catalyzes the attachment of L-aspartate to tRNA(Asp) in a two-step reaction: L-aspartate is first activated by ATP to form Asp-AMP and then transferred to the acceptor end of tRNA(Asp). This chain is Aspartate--tRNA ligase, found in Xanthomonas oryzae pv. oryzae (strain MAFF 311018).